Here is a 292-residue protein sequence, read N- to C-terminus: Xanthine dehydrogenase FAD-binding subunit (292 aa).

One can recognise an FAD-binding PCMH-type domain in the interval 1-176 (MFDFASYHRA…VAFHFPPQPK (176 aa)). Residues 27–34 (KLLAGGTD), 109–113 (ATYGG), I165, and F184 contribute to the FAD site.

Heterotrimer of XdhA, XdhB and XdhC. It depends on FAD as a cofactor.

The enzyme catalyses xanthine + NAD(+) + H2O = urate + NADH + H(+). It carries out the reaction hypoxanthine + NAD(+) + H2O = xanthine + NADH + H(+). It participates in purine metabolism; hypoxanthine degradation; urate from hypoxanthine: step 1/2. Its pathway is purine metabolism; hypoxanthine degradation; urate from hypoxanthine: step 2/2. In terms of biological role, presumed to be a dehydrogenase, but possibly an oxidase. Participates in limited purine salvage (requires aspartate) but does not support aerobic growth on purines as the sole carbon source (purine catabolism). This is Xanthine dehydrogenase FAD-binding subunit (xdhB) from Escherichia coli O157:H7.